Here is a 398-residue protein sequence, read N- to C-terminus: Ubiquitin-like modifier-activating enzyme 5 (398 aa).

ATP contacts are provided by G79, D100, K123, N146, and N180. The Zn(2+) site is built by C222 and C225. Catalysis depends on C246, which acts as the Glycyl thioester intermediate. Positions 299 and 304 each coordinate Zn(2+). A UFM1-interacting sequence (UIS) motif is present at residues 330-342 (VVHEDNEWGIELV). Residues 343–373 (SEVTEAELQDASGPIPDLPEGITVAYTIPEK) are linker. Residues 383 to 398 (ETEQSLEELMAQMKKI) carry the UFC1-binding sequence (UFC) motif.

It belongs to the ubiquitin-activating E1 family. UBA5 subfamily. In terms of assembly, homodimer; homodimerization is required for ufm1 activation. Interacts (via UIS motif) with ufm1; binds ufm1 via a trans-binding mechanism in which ufm1 interacts with distinct sites in both subunits of the uba5 homodimer. Interacts (via C-terminus) with ufc1.

Its subcellular location is the cytoplasm. It localises to the nucleus. It is found in the endoplasmic reticulum membrane. The protein localises to the golgi apparatus. In terms of biological role, E1-like enzyme which specifically catalyzes the first step in ufmylation. Activates ufm1 by first adenylating its C-terminal glycine residue with ATP, and thereafter linking this residue to the side chain of a cysteine residue in E1, yielding a ufm1-E1 thioester and free AMP. Activates ufm1 via a trans-binding mechanism, in which ufm1 interacts with distinct sites in both subunits of the uba5 homodimer. Trans-binding also promotes stabilization of the uba5 homodimer, and enhances ATP-binding. Transfer of ufm1 from uba5 to the E2-like enzyme UFC1 also takes place using a trans mechanism. Ufmylation plays a key role in various processes, such as ribosome recycling, response to DNA damage, interferon response or reticulophagy (also called ER-phagy). The chain is Ubiquitin-like modifier-activating enzyme 5 from Danio rerio (Zebrafish).